A 502-amino-acid polypeptide reads, in one-letter code: Probable glycerol kinase (502 aa).

Residue Thr-11 participates in substrate binding. An ATP-binding site is contributed by Arg-15. Substrate is bound by residues Arg-85, Tyr-140, and Asp-246. Residues Thr-268, Gly-313, and 416–420 (GMIAN) contribute to the ATP site.

This sequence belongs to the FGGY kinase family.

It carries out the reaction glycerol + ATP = sn-glycerol 3-phosphate + ADP + H(+). Its pathway is polyol metabolism; glycerol degradation via glycerol kinase pathway; sn-glycerol 3-phosphate from glycerol: step 1/1. This Caenorhabditis elegans protein is Probable glycerol kinase.